The primary structure comprises 344 residues: Phenylalanine--tRNA ligase alpha subunit (344 aa).

Glutamate 256 is a Mg(2+) binding site.

This sequence belongs to the class-II aminoacyl-tRNA synthetase family. Phe-tRNA synthetase alpha subunit type 1 subfamily. Tetramer of two alpha and two beta subunits. Mg(2+) is required as a cofactor.

The protein localises to the cytoplasm. The enzyme catalyses tRNA(Phe) + L-phenylalanine + ATP = L-phenylalanyl-tRNA(Phe) + AMP + diphosphate + H(+). The protein is Phenylalanine--tRNA ligase alpha subunit of Bacillus pumilus (strain SAFR-032).